The sequence spans 609 residues: MTDLSKIRNFSIIAHIDHGKSTLADRLIQVCGGLTAREMSEQVLDNMDIEKERGITIKAQTVRLNYTASDGETYELNLMDTPGHVDFAYEVSRSLAACEGALLVVDAAQGVEAQTLANVYQSIEHDHEIVPVINKIDLPAAEPEQVRAEIEDIIGLDASEAVMTSAKSGIGIEDVLEAIVAKIPPPEGDRDAPLKASLVDSWYDPYLGVVILVRVIDGVLTKGLNVRFMQGGTQHLIDRVGCFTPKRVDLPEIGPGEIGFITAQIKEVEQARVGDTITTVKNGAPEPLKGYKEVQPVVFCGLFPVDAADFEKLRESIGKLRLNDASFSYEMESSAALGFGFRAGFLGLLHLEIIQERLSREYDLDLITTAPSVVYTVHLAHTKTEDAKVIEIHNPADWPDVNRIDVIEEPWIKATIYTPDDYLGAILKLCQDRRGIQTNLTYVGGASTLRAQVTYDLPLNEVVFDFYDRLKSISRGYASFDYEQIGSREGDLVKMNILVNNEPVDALSLIVHRSVAEERGRGMCERLKDLIPRHLFKIPIQAAIGGKIIARETIAALRKDVTAKCYGGDISRKKKLLEKQKKGKARMREYGNVSIPQEAFIAALRMGEE.

Positions 5-187 (SKIRNFSIIA…AIVAKIPPPE (183 aa)) constitute a tr-type G domain. Residues 17–22 (DHGKST) and 134–137 (NKID) each bind GTP.

It belongs to the TRAFAC class translation factor GTPase superfamily. Classic translation factor GTPase family. LepA subfamily.

The protein resides in the cell inner membrane. It catalyses the reaction GTP + H2O = GDP + phosphate + H(+). Required for accurate and efficient protein synthesis under certain stress conditions. May act as a fidelity factor of the translation reaction, by catalyzing a one-codon backward translocation of tRNAs on improperly translocated ribosomes. Back-translocation proceeds from a post-translocation (POST) complex to a pre-translocation (PRE) complex, thus giving elongation factor G a second chance to translocate the tRNAs correctly. Binds to ribosomes in a GTP-dependent manner. In Erythrobacter litoralis (strain HTCC2594), this protein is Elongation factor 4.